The chain runs to 53 residues: UPF0391 membrane protein Bcep18194_C7021 (53 aa).

A run of 2 helical transmembrane segments spans residues 5–25 and 30–50; these read AVIF…GIAA and IAKI…LLGV.

The protein belongs to the UPF0391 family.

It localises to the cell membrane. The polypeptide is UPF0391 membrane protein Bcep18194_C7021 (Burkholderia lata (strain ATCC 17760 / DSM 23089 / LMG 22485 / NCIMB 9086 / R18194 / 383)).